A 1242-amino-acid chain; its full sequence is DNA polymerase catalytic subunit (1242 aa).

3 disordered regions span residues 14-38 (GAVAGGRRQRSQPGSAQGSGKRPPQ), 644-665 (LQSAPSSQDGVSPGSGSNSSSS), and 1109-1162 (APQG…RKPP). Low complexity predominate over residues 653–665 (GVSPGSGSNSSSS). The span at 1111–1125 (QGSSDNGDSVTTGVV) shows a compositional bias: polar residues. Positions 1145–1155 (ESNRRGGEPAK) are enriched in basic and acidic residues.

The protein belongs to the DNA polymerase type-B family. As to quaternary structure, forms a complex with the ssDNA-binding protein UL57, the DNA polymerase processivity factor UL44, and the alkaline exonuclease UL98. Interacts with the putative helicase-primase complex composed of UL70, UL102 and UL105 proteins; these interactions may coordinate leading and lagging strand DNA synthesis at the replication fork.

It localises to the host nucleus. The catalysed reaction is DNA(n) + a 2'-deoxyribonucleoside 5'-triphosphate = DNA(n+1) + diphosphate. Its function is as follows. Replicates viral genomic DNA in the late phase of lytic infection, producing long concatemeric DNA. The replication complex is composed of six viral proteins: the DNA polymerase, processivity factor, primase, primase-associated factor, helicase, and ssDNA-binding protein. The sequence is that of DNA polymerase catalytic subunit (UL54) from Homo sapiens (Human).